A 476-amino-acid chain; its full sequence is H2.0-like homeobox protein (476 aa).

3 disordered regions span residues 121–170 (HLPQ…SSKD), 328–401 (WRHS…HQTT), and 413–476 (TASS…LAGL). Low complexity predominate over residues 158-168 (HHSGSAPAPSS). Positions 273 to 332 (RSWSRAVFSNLQRKGLEKRFEIQKYVTKPDRKQLAAMLGLTDAQVKVWFQNRRMKWRHSK) form a DNA-binding region, homeobox. Basic and acidic residues-rich tracts occupy residues 331–346 (SKEA…EAGE) and 355–368 (EGER…RSEG). A compositionally biased stretch (acidic residues) spans 369-379 (EAESESSDSES). Positions 386 to 397 (DTERTEGTERSL) are enriched in basic and acidic residues. Residues 413–446 (TASSSASGSSFSFSSSSSLGSSNGSAGSASSLGS) show a composition bias toward low complexity. The span at 455–464 (HQPSVTSGPQ) shows a compositional bias: polar residues.

It belongs to the H2.0 homeobox family.

The protein resides in the nucleus. Its function is as follows. Transcription factor required for TBX21/T-bet-dependent maturation of Th1 cells as well as maintenance of Th1-specific gene expression. Involved in embryogenesis and hematopoiesis. The chain is H2.0-like homeobox protein (Hlx) from Rattus norvegicus (Rat).